Here is a 126-residue protein sequence, read N- to C-terminus: Fluoride-specific ion channel FluC (126 aa).

4 helical membrane-spanning segments follow: residues 5 to 25 (ILVAAGGAIGASLRYLLGAGV), 37 to 57 (VAIMMANVLGSIAMGFFVVWA), 65 to 85 (LSPFVMTGVLGGFTTFSAFSL), and 101 to 121 (LYVALSVGLSVFGLMAGLWVA). Residues Gly75 and Thr78 each coordinate Na(+).

The protein belongs to the fluoride channel Fluc/FEX (TC 1.A.43) family.

It is found in the cell inner membrane. The enzyme catalyses fluoride(in) = fluoride(out). Na(+) is not transported, but it plays an essential structural role and its presence is essential for fluoride channel function. Fluoride-specific ion channel. Important for reducing fluoride concentration in the cell, thus reducing its toxicity. The chain is Fluoride-specific ion channel FluC from Roseobacter denitrificans (strain ATCC 33942 / OCh 114) (Erythrobacter sp. (strain OCh 114)).